Consider the following 118-residue polypeptide: Small ribosomal subunit protein uS13 (118 aa).

The tract at residues 94–118 is disordered; that stretch reads SLPLRGQRTKTNARTRKGPRKPIKR.

It belongs to the universal ribosomal protein uS13 family. As to quaternary structure, part of the 30S ribosomal subunit. Forms a loose heterodimer with protein S19. Forms two bridges to the 50S subunit in the 70S ribosome.

Located at the top of the head of the 30S subunit, it contacts several helices of the 16S rRNA. In the 70S ribosome it contacts the 23S rRNA (bridge B1a) and protein L5 of the 50S subunit (bridge B1b), connecting the 2 subunits; these bridges are implicated in subunit movement. Contacts the tRNAs in the A and P-sites. The protein is Small ribosomal subunit protein uS13 of Pseudoalteromonas translucida (strain TAC 125).